The sequence spans 436 residues: UPF0597 protein YhaM (436 aa).

This sequence belongs to the UPF0597 family.

The protein is UPF0597 protein YhaM of Escherichia coli O127:H6 (strain E2348/69 / EPEC).